The primary structure comprises 697 residues: Elongation factor G (697 aa).

Positions 8–282 (EDYRNIGIMA…AVVDYLPSPL (275 aa)) constitute a tr-type G domain. Residues 17–24 (AHIDAGKT), 81–85 (DTPGH), and 135–138 (NKMD) contribute to the GTP site.

The protein belongs to the TRAFAC class translation factor GTPase superfamily. Classic translation factor GTPase family. EF-G/EF-2 subfamily.

Its subcellular location is the cytoplasm. Its function is as follows. Catalyzes the GTP-dependent ribosomal translocation step during translation elongation. During this step, the ribosome changes from the pre-translocational (PRE) to the post-translocational (POST) state as the newly formed A-site-bound peptidyl-tRNA and P-site-bound deacylated tRNA move to the P and E sites, respectively. Catalyzes the coordinated movement of the two tRNA molecules, the mRNA and conformational changes in the ribosome. This chain is Elongation factor G, found in Mycoplasmopsis agalactiae (strain NCTC 10123 / CIP 59.7 / PG2) (Mycoplasma agalactiae).